Here is a 216-residue protein sequence, read N- to C-terminus: Putative flagellar filament outer layer-like protein (216 aa).

Residues 1–22 form a disordered region; the sequence is MFAQDAAQTGEQTTQNQGENGN. Residues 8-22 show a composition bias toward low complexity; that stretch reads QTGEQTTQNQGENGN.

Its subcellular location is the periplasmic flagellum. It is found in the periplasm. Its function is as follows. Might be part of the flagella. The polypeptide is Putative flagellar filament outer layer-like protein (flaAL) (Brachyspira hyodysenteriae (strain ATCC 49526 / WA1)).